A 369-amino-acid chain; its full sequence is Maltose/maltodextrin import ATP-binding protein MalK (369 aa).

One can recognise an ABC transporter domain in the interval 4–234 (VTLHNVSKAY…PVNRFVASFI (231 aa)). Residue 36–43 (GPSGCGKS) coordinates ATP.

It belongs to the ABC transporter superfamily. Maltooligosaccharide importer (TC 3.A.1.1.1) family. The complex is composed of two ATP-binding proteins (MalK), two transmembrane proteins (MalG and MalK) and a solute-binding protein (MalE).

Its subcellular location is the cell inner membrane. The catalysed reaction is D-maltose(out) + ATP + H2O = D-maltose(in) + ADP + phosphate + H(+). Its function is as follows. Part of the ABC transporter complex MalEFGK involved in maltose/maltodextrin import. Responsible for energy coupling to the transport system. This is Maltose/maltodextrin import ATP-binding protein MalK from Photorhabdus laumondii subsp. laumondii (strain DSM 15139 / CIP 105565 / TT01) (Photorhabdus luminescens subsp. laumondii).